The chain runs to 37 residues: Cytochrome b6-f complex subunit 5 (37 aa).

The helical transmembrane segment at 5-25 threads the bilayer; sequence LLSGIVLGMITVSALGLFVAA.

It belongs to the PetG family. The 4 large subunits of the cytochrome b6-f complex are cytochrome b6, subunit IV (17 kDa polypeptide, PetD), cytochrome f and the Rieske protein, while the 4 small subunits are PetG, PetL, PetM and PetN. The complex functions as a dimer.

It is found in the plastid. It localises to the chloroplast thylakoid membrane. Functionally, component of the cytochrome b6-f complex, which mediates electron transfer between photosystem II (PSII) and photosystem I (PSI), cyclic electron flow around PSI, and state transitions. PetG is required for either the stability or assembly of the cytochrome b6-f complex. This is Cytochrome b6-f complex subunit 5 from Trieres chinensis (Marine centric diatom).